The primary structure comprises 518 residues: Membrane-bound lytic murein transglycosylase F (518 aa).

The N-terminal stretch at M1–A21 is a signal peptide. A non-LT domain region spans residues L22–G269. The tract at residues D270–N518 is LT domain. Residue E314 is part of the active site.

In the N-terminal section; belongs to the bacterial solute-binding protein 3 family. It in the C-terminal section; belongs to the transglycosylase Slt family.

It is found in the cell outer membrane. The enzyme catalyses Exolytic cleavage of the (1-&gt;4)-beta-glycosidic linkage between N-acetylmuramic acid (MurNAc) and N-acetylglucosamine (GlcNAc) residues in peptidoglycan, from either the reducing or the non-reducing ends of the peptidoglycan chains, with concomitant formation of a 1,6-anhydrobond in the MurNAc residue.. Its function is as follows. Murein-degrading enzyme that degrades murein glycan strands and insoluble, high-molecular weight murein sacculi, with the concomitant formation of a 1,6-anhydromuramoyl product. Lytic transglycosylases (LTs) play an integral role in the metabolism of the peptidoglycan (PG) sacculus. Their lytic action creates space within the PG sacculus to allow for its expansion as well as for the insertion of various structures such as secretion systems and flagella. The chain is Membrane-bound lytic murein transglycosylase F from Shigella dysenteriae serotype 1 (strain Sd197).